The primary structure comprises 150 residues: Large ribosomal subunit protein uL15 (150 aa).

Belongs to the universal ribosomal protein uL15 family. As to quaternary structure, part of the 50S ribosomal subunit.

In terms of biological role, binds to the 23S rRNA. The chain is Large ribosomal subunit protein uL15 from Rickettsia typhi (strain ATCC VR-144 / Wilmington).